Consider the following 212-residue polypeptide: uncharacterized protein (212 aa).

This is an uncharacterized protein from Aquifex aeolicus (strain VF5).